Consider the following 523-residue polypeptide: MLEGTLQDCWTSISKMQLHWTVLGLLPVLFIAILGPRVRQIWVNYVHLTKIPSPHKKDYFCFVTETTRAEFLNECARLLRKGFASGDVIRLHASWDHIVVLSPSYAECLRADEKFSPDTFSDKEMFGAVPGFEPYRFLCTHRDLVRNVISMRLNRCFVPATRYLSEAIDDALRKQMGNDSEWREVPLGNAVLKILTQSSFRALQGPELCYDDEWLDIATQYIVTSVTGVTALRKLPKFLVPLIHWFHPDAIKSRRLLSRARAKLIPFYEKRKKELYQARRNGTYRPEDADAFGWYEELADGRDYDPVVAQLTVAVAATHSTTDFMCQFLSDMVRYPEYIQPLRDELILALKEKGWKASTILQLPLLDSVMKESQRLKPVAMGFMRSIAQHDVYLQDAVKIPKNASVIVSAHSMRDATVYENPDSFDGYRFINPTKHPESRHFTSVSVNHMGFGFGKHACPGRFFVNLETKILIAHLLLKYDWKFANDGCPAIRTSGFDQVVDPSAKMLVRRRKEEIRIEALYE.

A helical membrane pass occupies residues 16 to 36 (MQLHWTVLGLLPVLFIAILGP). N-linked (GlcNAc...) asparagine glycans are attached at residues Asn-178, Asn-281, and Asn-403. Cys-459 contributes to the heme binding site.

This sequence belongs to the cytochrome P450 family. Requires heme as cofactor.

It is found in the membrane. Its pathway is mycotoxin biosynthesis. Its function is as follows. Cytochrome P450 monooxygenase; part of the gene cluster that mediates the biosynthesis of the diterpene glucoside brassicicene C. In the first step of the brassicicene C biosynthesis, the bifunctional diterpene synthase bsc8 that possesses both prenyl transferase and terpene cyclase activity, converts isopentenyl diphosphate and dimethylallyl diphosphate into geranylgeranyl diphosphate (GGDP) that is further converted into fusicocca-2,10(14)-diene, the first precursor for brassicicene C. Fusicocca-2,10(14)-diene is then substrate of cytochrome P450 monooxygenase bsc1 for hydroxylation at the C-8 position. Oxidation at C-16 position to aldehyde is then catalyzed by the cytochrome P450 monooyxygenase bsc7, yielding fusicocca-2,10(14)-diene-8-beta,16-diol. Follows the isomerization of the double bond and reduction of aldehyde to alcohol catalyzed by the short-chain dehydrogenase/reductase bsc3 to yield the diol compound fusicocca-1,10(14)-diene-8 beta,16-diol. The next step is the oxidation at the C-3 position of fusicocca-2,10(14)-diene-8-beta,16-diol catalyzed by the alpha-ketoglutarate dependent dioxygenase bsc9, to produce a triol compound. Methylation of the hydroxy group at position 16 is performed by the methyltransferase bsc6. 16-O-methylation is followed by oxidation at the C-13 position to ketone and an alkyl shift of the methyl group leads to brassicicene C. Although the probable acetyltransferase bsc4 is included in the gene cluster, no acetylation reactions are necessary for brassicicene C biosynthesis. However, the fact that brassicicene E, which is a structurally related compound having an acetoxy group at position 12, was previously isolated from another strain of A.brassicicola suggests that the ATCC 96836 strain might also produce a small amount of brassicicene E. The protein is Cytochrome P450 monooxygenase bsc5 of Alternaria brassicicola (Dark leaf spot agent).